We begin with the raw amino-acid sequence, 193 residues long: MMEPFRTHKGTVAVLMNDNIDTDQIIPKQYLKRIERTGFGKFLFDEWRYEEDRKENPHFPLNDPERKGASILITGENFGCGSSREHAPWALADYGFRVIIAGGFADIFYMNCMKNGMLPIVMDKETREKLAAIEARTIVEVDLENEVIMTTQHQFHFSIEKMWREKLLKGLDEIEITMQYEEYIQEYEEKVVH.

The protein belongs to the LeuD family. LeuD type 1 subfamily. In terms of assembly, heterodimer of LeuC and LeuD.

It carries out the reaction (2R,3S)-3-isopropylmalate = (2S)-2-isopropylmalate. It functions in the pathway amino-acid biosynthesis; L-leucine biosynthesis; L-leucine from 3-methyl-2-oxobutanoate: step 2/4. In terms of biological role, catalyzes the isomerization between 2-isopropylmalate and 3-isopropylmalate, via the formation of 2-isopropylmaleate. This Bacillus cytotoxicus (strain DSM 22905 / CIP 110041 / 391-98 / NVH 391-98) protein is 3-isopropylmalate dehydratase small subunit.